Consider the following 476-residue polypeptide: Protein DETOXIFICATION 3 (476 aa).

12 helical membrane-spanning segments follow: residues 35-55 (AAPMAAVTIAQYLLPVISVMV), 66-86 (GVALATSFTNVSGFSILFGLA), 117-137 (IPICVLISVLWIYIEKLLISL), 146-166 (VAGSYALWLIPALFAHAFFIP), 185-205 (LTTLLFHIPVCWAFVYAFGLG), 208-228 (GAAMAISVSFWFYVVILSCYV), 260-280 (AAMVCLEWWLFELLILCSGLL), 289-309 (VLSICLTTASLHYVIPGGVAA), 331-351 (VLAGLCLWLVESAFFSTLLFT), 370-390 (VANLTPLLCLSFILDGFTAVL), 402-422 (IGALNNVVAYYLVGAPVGVYL), and 433-453 (LWCGVVVGSAVQAIILAFVTA).

Belongs to the multi antimicrobial extrusion (MATE) (TC 2.A.66.1) family.

Its subcellular location is the membrane. This is Protein DETOXIFICATION 3 from Arabidopsis thaliana (Mouse-ear cress).